A 393-amino-acid polypeptide reads, in one-letter code: MNGPATRKDLMIVNMGPHHPSMHGVLRLILTLDGEDVIDCEPILGYLHRGMEKIAENRTIIQYLPYVTRWDYLATMFTEAITVNGPEQLGNIQVPKRASYIRVIMLELSRIASHLLWLGPFMADIGAQTPFFYIFRERELVYDLFEAATGMRMMHNFFRIGGVAADLPHGWIDKCLDFCDYFLTAVAEYQKLITQNPIFLERVEGVGIISGEEVINWGLSGPMLRASGIPWDLRKVDRYECYDEFDWEVQWQKEGDSLARYLVRLAEMTESVKIIQQALEGIPGGPYENLEIRSFDRARSPEWNDFDYRFISKKPSPTFELAKQELYVRVEAPKGELGIFLIGDQGGFPWRWKIRPPGFINLQILPQLVKRMKLADIMTILGSIDIIMGEVDR.

It belongs to the complex I 49 kDa subunit family. NDH is composed of at least 16 different subunits, 5 of which are encoded in the nucleus.

It localises to the plastid. The protein localises to the chloroplast thylakoid membrane. The catalysed reaction is a plastoquinone + NADH + (n+1) H(+)(in) = a plastoquinol + NAD(+) + n H(+)(out). It carries out the reaction a plastoquinone + NADPH + (n+1) H(+)(in) = a plastoquinol + NADP(+) + n H(+)(out). NDH shuttles electrons from NAD(P)H:plastoquinone, via FMN and iron-sulfur (Fe-S) centers, to quinones in the photosynthetic chain and possibly in a chloroplast respiratory chain. The immediate electron acceptor for the enzyme in this species is believed to be plastoquinone. Couples the redox reaction to proton translocation, and thus conserves the redox energy in a proton gradient. The polypeptide is NAD(P)H-quinone oxidoreductase subunit H, chloroplastic (Cucumis sativus (Cucumber)).